We begin with the raw amino-acid sequence, 328 residues long: D-alanine--D-alanine ligase (328 aa).

The ATP-grasp domain maps to 118–317 (LSVLTKFNIP…MPQMLDNEIT (200 aa)). 146–201 (KKALGLPFFVKPNQSGSSLGVSKVDALDQLEKALEFAFAEDNEILIESYLNGTEVS) lines the ATP pocket. The Mg(2+) site is built by Asp272, Glu284, and Asn286.

This sequence belongs to the D-alanine--D-alanine ligase family. Requires Mg(2+) as cofactor. Mn(2+) serves as cofactor.

It is found in the cytoplasm. The catalysed reaction is 2 D-alanine + ATP = D-alanyl-D-alanine + ADP + phosphate + H(+). The protein operates within cell wall biogenesis; peptidoglycan biosynthesis. In terms of biological role, cell wall formation. This chain is D-alanine--D-alanine ligase, found in Flavobacterium psychrophilum (strain ATCC 49511 / DSM 21280 / CIP 103535 / JIP02/86).